A 155-amino-acid polypeptide reads, in one-letter code: 6,7-dimethyl-8-ribityllumazine synthase (155 aa).

5-amino-6-(D-ribitylamino)uracil contacts are provided by residues F18, 49–51 (ALE), and 75–77 (CVI). 80–81 (ET) provides a ligand contact to (2S)-2-hydroxy-3-oxobutyl phosphate. H83 acts as the Proton donor in catalysis. Residue N108 participates in 5-amino-6-(D-ribitylamino)uracil binding. A (2S)-2-hydroxy-3-oxobutyl phosphate-binding site is contributed by R122.

It belongs to the DMRL synthase family.

The enzyme catalyses (2S)-2-hydroxy-3-oxobutyl phosphate + 5-amino-6-(D-ribitylamino)uracil = 6,7-dimethyl-8-(1-D-ribityl)lumazine + phosphate + 2 H2O + H(+). It participates in cofactor biosynthesis; riboflavin biosynthesis; riboflavin from 2-hydroxy-3-oxobutyl phosphate and 5-amino-6-(D-ribitylamino)uracil: step 1/2. Functionally, catalyzes the formation of 6,7-dimethyl-8-ribityllumazine by condensation of 5-amino-6-(D-ribitylamino)uracil with 3,4-dihydroxy-2-butanone 4-phosphate. This is the penultimate step in the biosynthesis of riboflavin. In Bartonella henselae (strain ATCC 49882 / DSM 28221 / CCUG 30454 / Houston 1) (Rochalimaea henselae), this protein is 6,7-dimethyl-8-ribityllumazine synthase.